Here is a 506-residue protein sequence, read N- to C-terminus: GPI mannosyltransferase 3 (506 aa).

An N-linked (GlcNAc...) asparagine glycan is attached at N115. The next 6 membrane-spanning stretches (helical) occupy residues 180–200 (AFAC…LLFW), 229–249 (YGRL…NIIA), 257–277 (FVFP…SSLY), 285–305 (YLSQ…LLTM), 330–350 (FVYP…SSFS), and 358–378 (FFFL…RFHQ). The N-linked (GlcNAc...) asparagine glycan is linked to N395.

This sequence belongs to the glycosyltransferase 22 family. PIGB subfamily.

It is found in the endoplasmic reticulum membrane. Its pathway is glycolipid biosynthesis; glycosylphosphatidylinositol-anchor biosynthesis. In terms of biological role, mannosyltransferase involved in glycosylphosphatidylinositol-anchor biosynthesis. Transfers the third mannose to Man2-GlcN-acyl-PI during GPI precursor assembly. The polypeptide is GPI mannosyltransferase 3 (gpi10) (Schizosaccharomyces pombe (strain 972 / ATCC 24843) (Fission yeast)).